The chain runs to 350 residues: Hepatocyte nuclear factor 3-gamma (350 aa).

A DNA-binding region (fork-head) is located at residues 116–207 (AKPPYSYISL…GNMFENGCYL (92 aa)). The tract at residues 217–276 (EKVKKGGSGAATTTRNGTGSAASTTTPAATVTSPPQPPPPAPEPEAQGGEDVGALDCGSP) is disordered. Residues 226-249 (AATTTRNGTGSAASTTTPAATVTS) show a composition bias toward low complexity. Pro residues predominate over residues 250 to 259 (PPQPPPPAPE).

As to quaternary structure, interacts with FOXA2. Expressed in erythroleukemia and hepatoma cell lines and in liver and pancreas. Not expressed in any other cell lines or tissues examined.

The protein localises to the nucleus. In terms of biological role, transcription factor that is thought to act as a 'pioneer' factor opening the compacted chromatin for other proteins through interactions with nucleosomal core histones and thereby replacing linker histones at target enhancer and/or promoter sites. Originally described as a transcription activator for a number of liver genes such as AFP, albumin, tyrosine aminotransferase, PEPCK, etc. Interacts with the cis-acting regulatory regions of these genes. Involved in glucose homeostasis; binds to and activates transcription from the G6PC1 promoter. Binds to the CYP3A4 promoter and activates its transcription in cooperation with CEBPA. Binds to the CYP3A7 promoter together with members of the CTF/NF-I family. Involved in regulation of neuronal-specific transcription. May be involved in regulation of spermatogenesis. The sequence is that of Hepatocyte nuclear factor 3-gamma (FOXA3) from Homo sapiens (Human).